We begin with the raw amino-acid sequence, 209 residues long: ATP-dependent Clp protease proteolytic subunit (209 aa).

The active-site Nucleophile is the S107. The active site involves H132.

Belongs to the peptidase S14 family. In terms of assembly, fourteen ClpP subunits assemble into 2 heptameric rings which stack back to back to give a disk-like structure with a central cavity, resembling the structure of eukaryotic proteasomes.

The protein localises to the cytoplasm. The enzyme catalyses Hydrolysis of proteins to small peptides in the presence of ATP and magnesium. alpha-casein is the usual test substrate. In the absence of ATP, only oligopeptides shorter than five residues are hydrolyzed (such as succinyl-Leu-Tyr-|-NHMec, and Leu-Tyr-Leu-|-Tyr-Trp, in which cleavage of the -Tyr-|-Leu- and -Tyr-|-Trp bonds also occurs).. Functionally, cleaves peptides in various proteins in a process that requires ATP hydrolysis. Has a chymotrypsin-like activity. Plays a major role in the degradation of misfolded proteins. The protein is ATP-dependent Clp protease proteolytic subunit of Methylobacterium nodulans (strain LMG 21967 / CNCM I-2342 / ORS 2060).